A 135-amino-acid chain; its full sequence is Peptide methionine sulfoxide reductase MsrB (135 aa).

The 123-residue stretch at 13–135 (DADWREQLTP…NGHSMVFEPV (123 aa)) folds into the MsrB domain. Residues Cys52, Cys55, Cys101, and Cys104 each coordinate Zn(2+). Catalysis depends on Cys124, which acts as the Nucleophile.

This sequence belongs to the MsrB Met sulfoxide reductase family. Zn(2+) is required as a cofactor.

The enzyme catalyses L-methionyl-[protein] + [thioredoxin]-disulfide + H2O = L-methionyl-(R)-S-oxide-[protein] + [thioredoxin]-dithiol. This chain is Peptide methionine sulfoxide reductase MsrB, found in Agrobacterium fabrum (strain C58 / ATCC 33970) (Agrobacterium tumefaciens (strain C58)).